A 372-amino-acid chain; its full sequence is UDP-N-acetylenolpyruvoylglucosamine reductase (372 aa).

Residues 29–205 (VGPTARRLIT…LEVEFALDAS (177 aa)) enclose the FAD-binding PCMH-type domain. Arg177 is a catalytic residue. The Proton donor role is filled by Ser260. Glu364 is an active-site residue.

The protein belongs to the MurB family. Requires FAD as cofactor.

The protein localises to the cytoplasm. The enzyme catalyses UDP-N-acetyl-alpha-D-muramate + NADP(+) = UDP-N-acetyl-3-O-(1-carboxyvinyl)-alpha-D-glucosamine + NADPH + H(+). The protein operates within cell wall biogenesis; peptidoglycan biosynthesis. Functionally, cell wall formation. The sequence is that of UDP-N-acetylenolpyruvoylglucosamine reductase from Mycobacterium avium (strain 104).